A 261-amino-acid chain; its full sequence is Putative hydro-lyase SH0274 (261 aa).

It belongs to the D-glutamate cyclase family.

The protein is Putative hydro-lyase SH0274 of Staphylococcus haemolyticus (strain JCSC1435).